We begin with the raw amino-acid sequence, 136 residues long: UPF0102 protein BBta_0181 (136 aa).

The protein belongs to the UPF0102 family.

This chain is UPF0102 protein BBta_0181, found in Bradyrhizobium sp. (strain BTAi1 / ATCC BAA-1182).